A 220-amino-acid polypeptide reads, in one-letter code: Uracil-DNA glycosylase (220 aa).

The Proton acceptor role is filled by Asp-61.

This sequence belongs to the uracil-DNA glycosylase (UDG) superfamily. UNG family.

It localises to the cytoplasm. It carries out the reaction Hydrolyzes single-stranded DNA or mismatched double-stranded DNA and polynucleotides, releasing free uracil.. Its function is as follows. Excises uracil residues from the DNA which can arise as a result of misincorporation of dUMP residues by DNA polymerase or due to deamination of cytosine. The protein is Uracil-DNA glycosylase of Pseudoalteromonas translucida (strain TAC 125).